Reading from the N-terminus, the 587-residue chain is Lamin-B1 (587 aa).

Positions 1–11 (MATATPVQQRA) are enriched in polar residues. The segment at 1–29 (MATATPVQQRAGSRASAPATPFSPTRLSR) is disordered. Alanine 2 is subject to N-acetylalanine. The tract at residues 2-34 (ATATPVQQRAGSRASAPATPFSPTRLSRLQEKE) is head. Phosphothreonine is present on residues threonine 3 and threonine 5. An Omega-N-methylarginine modification is found at arginine 14. Serine 16 is subject to Phosphoserine. Threonine 20 is modified (phosphothreonine). Serine 23 carries the phosphoserine modification. Phosphothreonine is present on threonine 25. Serine 28 carries the phosphoserine modification. One can recognise an IF rod domain in the interval 32–388 (EKEELRELND…KLLEGEEERL (357 aa)). A coil 1A region spans residues 35-69 (ELRELNDRLAVYIDKVRSLETENSALQLQVTEREE). Positions 70 to 81 (VRGRELTGLKAL) are linker 1. The tract at residues 82-215 (YETELADARR…EFRKNMYEEE (134 aa)) is coil 1B. A Glycyl lysine isopeptide (Lys-Gly) (interchain with G-Cter in SUMO2) cross-link involves residue lysine 102. Lysine 111 carries the N6-acetyllysine modification. Lysine 123 participates in a covalent cross-link: Glycyl lysine isopeptide (Lys-Gly) (interchain with G-Cter in SUMO2). Serine 126 is subject to Phosphoserine. Lysine 145 participates in a covalent cross-link: Glycyl lysine isopeptide (Lys-Gly) (interchain with G-Cter in SUMO2). An N6-acetyllysine; alternate modification is found at lysine 157. A Glycyl lysine isopeptide (Lys-Gly) (interchain with G-Cter in SUMO2); alternate cross-link involves residue lysine 157. A Phosphoserine modification is found at serine 158. Lysine 181 is covalently cross-linked (Glycyl lysine isopeptide (Lys-Gly) (interchain with G-Cter in SUMO2)). Serine 200 and serine 232 each carry phosphoserine. The tract at residues 216–243 (INETRRKHETRLVEVDSGRQIEYEYKLA) is linker 2. Glycyl lysine isopeptide (Lys-Gly) (interchain with G-Cter in SUMO2) cross-links involve residues lysine 241 and lysine 261. Positions 244–386 (QALHEMREQH…YRKLLEGEEE (143 aa)) are coil 2. Lysine 271 bears the N6-acetyllysine; alternate mark. Lysine 271 is covalently cross-linked (Glycyl lysine isopeptide (Lys-Gly) (interchain with G-Cter in SUMO2); alternate). Residues serine 278 and serine 302 each carry the phosphoserine modification. Lysine 312 participates in a covalent cross-link: Glycyl lysine isopeptide (Lys-Gly) (interchain with G-Cter in SUMO2). An N6-acetyllysine; alternate modification is found at lysine 330. Residue lysine 330 forms a Glycyl lysine isopeptide (Lys-Gly) (interchain with G-Cter in SUMO2); alternate linkage. Phosphoserine is present on residues serine 375 and serine 393. The tract at residues 387–587 (RLKLSPSPSS…RASNKSCAIM (201 aa)) is tail. Residues 390 to 409 (LSPSPSSRVTVSRASSSRSV) are compositionally biased toward low complexity. Residues 390 to 432 (LSPSPSSRVTVSRASSSRSVRTTRGKRKRVDVEESEASSSVSI) form a disordered region. A glycan (O-linked (GlcNAc) threonine) is linked at threonine 399. Arginine 413 is subject to Omega-N-methylarginine. Residues 415–420 (KRKRVD) carry the Nuclear localization signal motif. Residues 430 to 546 (VSISHSASAT…EEVAQRSTVF (117 aa)) enclose the LTD domain. N6-acetyllysine is present on lysine 483. Residue lysine 532 forms a Glycyl lysine isopeptide (Lys-Gly) (interchain with G-Cter in SUMO2) linkage. Serine 534 carries the phosphoserine modification. Residue lysine 547 forms a Glycyl lysine isopeptide (Lys-Gly) (interchain with G-Cter in SUMO2) linkage. Positions 550–587 (IPEEEEEEEEEPIGVPLEEERFHQQGTPRASNKSCAIM) are disordered. Over residues 551-561 (PEEEEEEEEEP) the composition is skewed to acidic residues. A compositionally biased stretch (polar residues) spans 573–587 (QQGTPRASNKSCAIM). Threonine 576 is subject to Phosphothreonine. Cysteine 584 is subject to Cysteine methyl ester. Cysteine 584 is lipidated: S-farnesyl cysteine. Positions 585–587 (AIM) are cleaved as a propeptide — removed in mature form.

Belongs to the intermediate filament family. Homodimer. Lamin dimers then assemble into dimeric head-to-tail polymers. Ultimately, two head-to-tail polymers assemble laterally into a protofilament with a uniformly shaped rod of 3.5 nm in diameter. Interacts with SPAG4 and SEPT12. B-type lamins undergo a series of modifications, such as farnesylation and phosphorylation. Increased phosphorylation of the lamins occurs before envelope disintegration and probably plays a role in regulating lamin associations. Post-translationally, phosphorylation plays a key role in lamin organization, subcellular localization and nuclear envelope disintegration. Phosphorylation by CDK1 at Ser-23 and Ser-393 at the onset of mitosis drives lamin disassembly and nuclear envelope breakdown.

The protein resides in the nucleus lamina. Its function is as follows. Lamins are intermediate filament proteins that assemble into a filamentous meshwork, and which constitute the major components of the nuclear lamina, a fibrous layer on the nucleoplasmic side of the inner nuclear membrane. Lamins provide a framework for the nuclear envelope, bridging the nuclear envelope and chromatin, thereby playing an important role in nuclear assembly, chromatin organization, nuclear membrane and telomere dynamics. The structural integrity of the lamina is strictly controlled by the cell cycle, as seen by the disintegration and formation of the nuclear envelope in prophase and telophase, respectively. This Rattus norvegicus (Rat) protein is Lamin-B1 (Lmnb1).